We begin with the raw amino-acid sequence, 204 residues long: Glycerol-3-phosphate acyltransferase (204 aa).

The next 5 membrane-spanning stretches (helical) occupy residues 8–28, 53–73, 81–101, 116–136, and 155–175; these read ILIFAYLLGSINSAIIVCYIF, VPAAITLIFDILKGLVPVVIA, FITACTALYAILGHIFPIFFG, FGFSWILGLIFVITWLCVAII, and VIFTSDLQVAAPFLIIAIIIL.

Belongs to the PlsY family. As to quaternary structure, probably interacts with PlsX.

Its subcellular location is the cell inner membrane. The catalysed reaction is an acyl phosphate + sn-glycerol 3-phosphate = a 1-acyl-sn-glycero-3-phosphate + phosphate. It functions in the pathway lipid metabolism; phospholipid metabolism. Its function is as follows. Catalyzes the transfer of an acyl group from acyl-phosphate (acyl-PO(4)) to glycerol-3-phosphate (G3P) to form lysophosphatidic acid (LPA). This enzyme utilizes acyl-phosphate as fatty acyl donor, but not acyl-CoA or acyl-ACP. The protein is Glycerol-3-phosphate acyltransferase of Francisella tularensis subsp. mediasiatica (strain FSC147).